Here is a 514-residue protein sequence, read N- to C-terminus: Protein BFR2 (514 aa).

2 disordered regions span residues 14–153 (SKPS…KLKE) and 353–382 (YHTS…QTNK). Positions 25–42 (NDLRDNVFDHNGDDDHSN) are enriched in basic and acidic residues. Residues 118–134 (SESEDDDEDESESEDKD) are compositionally biased toward acidic residues. The segment covering 135-144 (EVTKEEDSNL) has biased composition (basic and acidic residues). The segment covering 354–378 (HTSQSDITEQGSIDDQNQDIPNENK) has biased composition (polar residues).

Belongs to the AATF family.

The protein localises to the nucleus. Its subcellular location is the nucleolus. The protein is Protein BFR2 (BFR2) of Debaryomyces hansenii (strain ATCC 36239 / CBS 767 / BCRC 21394 / JCM 1990 / NBRC 0083 / IGC 2968) (Yeast).